A 239-amino-acid chain; its full sequence is Phosphoribosylaminoimidazole-succinocarboxamide synthase (239 aa).

Belongs to the SAICAR synthetase family.

The catalysed reaction is 5-amino-1-(5-phospho-D-ribosyl)imidazole-4-carboxylate + L-aspartate + ATP = (2S)-2-[5-amino-1-(5-phospho-beta-D-ribosyl)imidazole-4-carboxamido]succinate + ADP + phosphate + 2 H(+). It participates in purine metabolism; IMP biosynthesis via de novo pathway; 5-amino-1-(5-phospho-D-ribosyl)imidazole-4-carboxamide from 5-amino-1-(5-phospho-D-ribosyl)imidazole-4-carboxylate: step 1/2. The sequence is that of Phosphoribosylaminoimidazole-succinocarboxamide synthase from Bacillus cereus (strain AH187).